Here is a 177-residue protein sequence, read N- to C-terminus: Bifunctional protein PyrR (177 aa).

The PRPP-binding motif lies at 98-110; the sequence is IILVDDVIYTGRT.

It belongs to the purine/pyrimidine phosphoribosyltransferase family. PyrR subfamily. As to quaternary structure, homodimer and homohexamer; in equilibrium.

It carries out the reaction UMP + diphosphate = 5-phospho-alpha-D-ribose 1-diphosphate + uracil. Its function is as follows. Regulates transcriptional attenuation of the pyrimidine nucleotide (pyr) operon by binding in a uridine-dependent manner to specific sites on pyr mRNA. This disrupts an antiterminator hairpin in the RNA and favors formation of a downstream transcription terminator, leading to a reduced expression of downstream genes. In terms of biological role, also displays a weak uracil phosphoribosyltransferase activity which is not physiologically significant. This Clostridium kluyveri (strain ATCC 8527 / DSM 555 / NBRC 12016 / NCIMB 10680 / K1) protein is Bifunctional protein PyrR.